The primary structure comprises 1069 residues: RE1-silencing transcription factor (1069 aa).

The interval 32-121 is interaction with SIN3A; that stretch reads DLHDLSKAEL…SLELSVVEPQ (90 aa). The segment at 43–57 is interaction with SIN3B; that stretch reads APQLIMLANVALTGE. Positions 85-104 are disordered; it reads SDSEGEGLEESAELKGDPSG. The interaction with ZFP90 stretch occupies residues 144–417; it reads PVAEDKCKNL…KSKHPTCPSK (274 aa). The C2H2-type 1 zinc-finger motif lies at 158-180; the sequence is FRCKPCQYEAESEEQFVHHIRVH. A required for binding to the neuron-restrictive silencer element region spans residues 200–211; sequence SGASPSEEGEFS. 7 consecutive C2H2-type zinc fingers follow at residues 215-237, 247-269, 275-297, 303-325, 331-354, 360-382, and 388-411; these read IRCD…LKHH, YKCI…LRNH, YTCS…VRTH, YKCE…MRTH, FKCD…RQVH, LNCP…VELH, and FNCP…KSKH. Disordered regions lie at residues 425-737 and 830-1022; these read KLKK…MELP and KASK…GKEG. Residues 451–482 show a composition bias toward basic and acidic residues; that stretch reads EQAKTKGVDASARRSERPVKGVGKDVPKEKKP. Residues 484-493 are compositionally biased toward polar residues; sequence SNASVVQVTT. 2 stretches are compositionally biased toward basic and acidic residues: residues 498 to 511 and 554 to 576; these read SAVE…KHTD and ESKP…KADK. Positions 584–600 are enriched in basic residues; sequence KGGKKTALKTKTAKKGS. Residues 630–643 show a composition bias toward polar residues; it reads AVVTPSGSTQTELS. Pro residues-rich tracts occupy residues 679–706 and 713–734; these read PSPP…PCPM and PSPP…PLPM. Basic and acidic residues-rich tracts occupy residues 851–860 and 876–886; these read RREETPKDQE and GGTEEAGESRA. A compositionally biased stretch (low complexity) spans 894–904; that stretch reads STSALSSEQSS. Positions 930–943 are enriched in basic and acidic residues; it reads TEQKTDRVPLKDSA. Position 948 is a phosphoserine (serine 948). Low complexity predominate over residues 957–968; it reads EAAAPAVVASPP. The interval 981-1059 is interaction with RCOR1; sequence EGIHSHDGSD…HLNRHLVNVY (79 aa). The segment at 1032 to 1054 adopts a C2H2-type 9 zinc-finger fold; it reads FVCIFCDRSFRKEKDYSKHLNRH.

In terms of assembly, isoform 1 and isoform 6 form heterodimers. Isoform 6: Forms homodimers and homooligomers; binds to the neuron-restrictive silencer element (NRSE) as monomer. Interacts with SIN3A, SIN3B and RCOR1. Interacts with CDYL. Interacts with EHMT1 and EHMT2 only in the presence of CDYL. Part of a complex containing at least CDYL, REST, WIZ, SETB1, EHMT1 and EHMT2. Interacts (via zinc-finger DNA-binding domain) with ZFP90 (via N- and C-termini); the interaction inhibits REST repressor activity. Interacts (via C2H2-type zinc finger 5) with PRICKLE1. Interacts with FBXW11 and BTRC. Interacts with USP7. O-glycosylated. In terms of processing, phosphorylated; phosphorylation is required for ubiquitination. Post-translationally, ubiquitinated; ubiquitination is mediated by BTRC and leads to proteasomal degradation in G2 phase. Ubiquitination increases during neuronal differentiation. Deubiquitinated by USP7; leading to its stabilization and promoting the maintenance of neural progenitor cells. In terms of tissue distribution, expressed in the hippocampus including the granule cell layer of the dentate gyrus, the pyramidal cell layers of CA1 and CA3, the apical and basilar dendrite layers of the stratum radiatum and stratum oriens of CA1, the stratum lucidum and stratum oriens of CA3 and in astroglia (at protein level). Expressed in the brain, with the highest levels in the neurons of hippocampus, pons/medulla and midbrain.

The protein localises to the nucleus. It is found in the cytoplasm. Its function is as follows. Transcriptional repressor which binds neuron-restrictive silencer element (NRSE) and represses neuronal gene transcription in non-neuronal cells. Restricts the expression of neuronal genes by associating with two distinct corepressors, SIN3A and RCOR1, which in turn recruit histone deacetylase to the promoters of REST-regulated genes. Mediates repression by recruiting the BHC complex at RE1/NRSE sites which acts by deacetylating and demethylating specific sites on histones, thereby acting as a chromatin modifier. Transcriptional repression by REST-CDYL via the recruitment of histone methyltransferase EHMT2 may be important in transformation suppression. Represses the expression of SRRM4 in non-neural cells to prevent the activation of neural-specific splicing events and to prevent production of REST isoform 6. Repressor activity may be inhibited by forming heterodimers with isoform 6, thereby preventing binding to NRSE or binding to corepressors and leading to derepression of target genes. Also maintains repression of neuronal genes in neural stem cells, and allows transcription and differentiation into neurons by dissociation from RE1/NRSE sites of target genes. Thereby is involved in maintaining the quiescent state of adult hippocampal neural stem cells and preventing premature differentiation into mature neurons. Plays a role in the developmental switch in synaptic NMDA receptor composition during postnatal development, by repressing GRIN2B expression and thereby altering NMDA receptor properties from containing primarily GRIN2B to primarily GRIN2A subunits. Acts as a regulator of osteoblast differentiation. Key repressor of gene expression in hypoxia; represses genes in hypoxia by direct binding to an RE1/NRSE site on their promoter regions. May also function in stress resistance in the brain during aging; possibly by regulating expression of genes involved in cell death and in the stress response. Repressor of gene expression in the hippocampus after ischemia by directly binding to RE1/NRSE sites and recruiting SIN3A and RCOR1 to promoters of target genes, thereby promoting changes in chromatin modifications and ischemia-induced cell death. After ischemia, might play a role in repression of miR-132 expression in hippocampal neurons, thereby leading to neuronal cell death. Binds to the 3' region of the neuron-restrictive silencer element (NRSE), with lower affinity than full-length REST isoform 1. Exhibits weaker repressor activity compared to isoform 1. May negatively regulate the repressor activity of isoform 1 by binding to isoform 1, thereby preventing its binding to NRSE and leading to derepression of target genes. However, in another study, does not appear to be implicated in repressor activity of a NRSE motif-containing reporter construct nor in inhibitory activity on the isoform 1 transcriptional repressor activity. Post-transcriptional inactivation of REST by SRRM4-dependent alternative splicing into isoform 6 is required in mechanosensory hair cells in the inner ear for derepression of neuronal genes and hearing. In Rattus norvegicus (Rat), this protein is RE1-silencing transcription factor (Rest).